The following is a 518-amino-acid chain: Alpha-ionylideneethane synthase abl3 (518 aa).

Disordered regions lie at residues 294–355 and 440–466; these read AAPG…SVFE and KAPP…QRSK. Positions 299–339 are enriched in low complexity; that stretch reads TSSDNSSDNRSSSISSTSSTGTDGSGAGDASSVHSSGVHSD.

The protein belongs to the alpha-ionylideneethane synthase family.

It functions in the pathway hormone biosynthesis. In terms of biological role, alpha-ionylideneethane synthase involved in the biosynthesis of abscisic acid (ABA), a phytohormone that acts antagonistically toward salicylic acid (SA), jasmonic acid (JA) and ethylene (ETH) signaling, to impede plant defense responses. During pathogen-host interaction, ABA plays a dual role in disease severity by increasing plant susceptibility and accelerating pathogenesis in the fungus itself. The first step of the pathway catalyzes the reaction from farnesyl diphosphate to alpha-ionylideneethane performed by the alpha-ionylideneethane synthase ABA3 via a three-step reaction mechanism involving 2 neutral intermediates, beta-farnesene and allofarnesene. The cytochrome P450 monooxygenase ABA1 might then be involved in the conversion of alpha-ionylideneethane to alpha-ionylideneacetic acid. Alpha-ionylideneacetic acid is further converted to abscisic acid in 2 steps involving the cytochrome P450 monooxygenase ABA2 and the short-chain dehydrogenase/reductase ABA4, via the intermediates 1'-deoxy-ABA or 1',4'-trans-diol-ABA, depending on the order of action of these 2 enzymes. ABA2 is responsible for the hydroxylation of carbon atom C-1' and ABA4 might be involved in the oxidation of the C-4' carbon atom. This is Alpha-ionylideneethane synthase abl3 from Pyricularia oryzae (strain Y34) (Rice blast fungus).